Here is a 1011-residue protein sequence, read N- to C-terminus: MLPENLPTDPAAMTPAAVAAALRVDTKVGLSSNEVEERRQAFGINELPSEPPTPFWKLVLAQFEDTLVRILLLAATVSFAMAVVENNAADFVEPFIILLILILNATVGVWQENRAEGAIEALKSFVPKTAVVLRDGDIKTVNAEELVPGDVVEVAVGNRVPADMRVVELHSTTLRADQSILNGESVEAMKQIEAVKGRQERFPACMVYSGTAIVYGKALCVVVRTGASTEIGTIERDVREQEEVKTPLQVKLDEFGVLLSKVIGYICLVVFAVNLVRWYATHKPTKNETFFTRYIQPSVHCLKVAVALAVAAIPEGLPAVVTTCLALGTRRMAQHNALVRDLPSVETLGRCTVICSDKTGTLTTNMMSVLHAFTLKGDGSIKEYELKDSRFNIVSNSVTCEGRQVSSPLEQDGALTKLANIAVLCNDASLHHNAATVQVEKIGEATEAALLVMSEKFANIKGDSAVNAFRTLCEGKWKKNATLEFTRKRKSMSVHVTSTVTGSPASSTNNLFVKGAPEEVLRRSTHVMQDNGAVVQLSATHRKRIIEQLDKISGGANALRCIGFAFKPTKAVQHVRLNDPATFEDVESDLTFVGACGMLDPPREEVRDAIVKCRTAGIRVVVITGDRKETAEAICCKLGLLSSTADTTGLSYTGQELDAMTPAQKREAVLTAVLFSRTDPSHKMQLVQLLKDERLICAMTGDGVNDAPALKKADIGIAMGSGTEVAKSASKMVLADDNFATVVKAVQEGRAIYNNTKQFIRYLISSNIGEVVCILVTGLFGLPEALSPVQLLWVNLVTDGLPATALGFNAPDRDIMEQRPRRMEEPIVNGWLFMRYMVIGVYVGLATVGGFLWWFLRHGFSWHDLTTYTACSDMTNGTCLLLANPQTARAIALSILVVVEMLNALNALSENASLIVSRPSSNVWLLFAIFSSLSLHLIIMYVPFFAKLFNIVPLGVDPHVVQQAQPWSILTPTNFDDWKAVIVFSVPVIFLDELLKFITRRMEKAQEKKKD.

Residues 1–65 (MLPENLPTDP…WKLVLAQFED (65 aa)) are Cytoplasmic-facing. Residues 66-84 (TLVRILLLAATVSFAMAVV) form a helical membrane-spanning segment. The Extracellular segment spans residues 85–90 (ENNAAD). Residues 91-110 (FVEPFIILLILILNATVGVW) form a helical membrane-spanning segment. At 111 to 258 (QENRAEGAIE…QVKLDEFGVL (148 aa)) the chain is on the cytoplasmic side. Residues 259–278 (LSKVIGYICLVVFAVNLVRW) form a helical membrane-spanning segment. The Extracellular segment spans residues 279 to 303 (YATHKPTKNETFFTRYIQPSVHCLK). The helical transmembrane segment at 304-321 (VAVALAVAAIPEGLPAVV) threads the bilayer. The Cytoplasmic segment spans residues 322–770 (TTCLALGTRR…RYLISSNIGE (449 aa)). Asp357 (4-aspartylphosphate intermediate) is an active-site residue. Lys514 contacts ATP. A helical transmembrane segment spans residues 771–794 (VVCILVTGLFGLPEALSPVQLLWV). At 795-835 (NLVTDGLPATALGFNAPDRDIMEQRPRRMEEPIVNGWLFMR) the chain is on the extracellular side. The chain crosses the membrane as a helical span at residues 836–856 (YMVIGVYVGLATVGGFLWWFL). Residues 857 to 885 (RHGFSWHDLTTYTACSDMTNGTCLLLANP) lie on the Cytoplasmic side of the membrane. Residues 886 to 905 (QTARAIALSILVVVEMLNAL) traverse the membrane as a helical segment. Residues 906–922 (NALSENASLIVSRPSSN) are Extracellular-facing. Residues 923-942 (VWLLFAIFSSLSLHLIIMYV) traverse the membrane as a helical segment. The Cytoplasmic segment spans residues 943-1011 (PFFAKLFNIV…MEKAQEKKKD (69 aa)).

Belongs to the cation transport ATPase (P-type) (TC 3.A.3) family.

It is found in the flagellar pocket. It localises to the cell membrane. The enzyme catalyses Ca(2+)(in) + ATP + H2O = Ca(2+)(out) + ADP + phosphate + H(+). Functionally, this magnesium-dependent enzyme catalyzes the hydrolysis of ATP coupled with the transport of the calcium. The protein is Probable calcium-transporting ATPase (TBA1) of Trypanosoma brucei brucei.